The primary structure comprises 328 residues: Phosphatidate cytidylyltransferase (328 aa).

Over residues 15-29 (SGRSATKSVTTNDAG) the composition is skewed to polar residues. The disordered stretch occupies residues 15 to 50 (SGRSATKSVTTNDAGTGNPAEQPARGAKQQPATETS). The next 7 membrane-spanning stretches (helical) occupy residues 58-78 (AAIV…VFVP), 103-123 (AGYL…VWLT), 124-144 (WPFG…VCMI), 173-193 (ATVF…MLVY), 202-222 (FCMM…GVLF), 239-259 (GFAG…TFLV), and 263-283 (PWIG…GDLV).

The protein belongs to the CDS family.

The protein localises to the cell membrane. It carries out the reaction a 1,2-diacyl-sn-glycero-3-phosphate + CTP + H(+) = a CDP-1,2-diacyl-sn-glycerol + diphosphate. It functions in the pathway phospholipid metabolism; CDP-diacylglycerol biosynthesis; CDP-diacylglycerol from sn-glycerol 3-phosphate: step 3/3. This chain is Phosphatidate cytidylyltransferase (cdsA), found in Mycobacterium tuberculosis (strain CDC 1551 / Oshkosh).